Here is a 450-residue protein sequence, read N- to C-terminus: uncharacterized protein (450 aa).

Positions 387–416 are enriched in basic and acidic residues; that stretch reads ELDEKNNNKEENKNQDLHEPKESSSEDLLK. The segment at 387-439 is disordered; sequence ELDEKNNNKEENKNQDLHEPKESSSEDLLKRLNNLKINTNEGPVQDNENHDNE.

This is an uncharacterized protein from Saccharomyces cerevisiae (strain ATCC 204508 / S288c) (Baker's yeast).